The following is a 270-amino-acid chain: tRNA pseudouridine synthase A (270 aa).

Aspartate 60 acts as the Nucleophile in catalysis. The interval 107–111 (FHARF) is RNA binding. Residue tyrosine 118 coordinates substrate. Residues 168-172 (QCQSR) are interaction with tRNA.

Belongs to the tRNA pseudouridine synthase TruA family. As to quaternary structure, homodimer.

It catalyses the reaction uridine(38/39/40) in tRNA = pseudouridine(38/39/40) in tRNA. In terms of biological role, formation of pseudouridine at positions 38, 39 and 40 in the anticodon stem and loop of transfer RNAs. This Shigella boydii serotype 4 (strain Sb227) protein is tRNA pseudouridine synthase A.